The sequence spans 275 residues: Pyridoxal phosphate homeostasis protein (275 aa).

Serine 6 is modified (phosphoserine). Residue lysine 47 is modified to N6-(pyridoxal phosphate)lysine. Tyrosine 69 carries the phosphotyrosine modification. N6-succinyllysine is present on lysine 125. Residues serine 226 and serine 244 each carry the phosphoserine modification.

The protein belongs to the pyridoxal phosphate-binding protein YggS/PROSC family.

Its function is as follows. Pyridoxal 5'-phosphate (PLP)-binding protein, which may be involved in intracellular homeostatic regulation of pyridoxal 5'-phosphate (PLP), the active form of vitamin B6. This Pongo abelii (Sumatran orangutan) protein is Pyridoxal phosphate homeostasis protein.